Consider the following 93-residue polypeptide: Small ribosomal subunit protein uS19 (93 aa).

It belongs to the universal ribosomal protein uS19 family.

In terms of biological role, protein S19 forms a complex with S13 that binds strongly to the 16S ribosomal RNA. The chain is Small ribosomal subunit protein uS19 from Cutibacterium acnes (strain DSM 16379 / KPA171202) (Propionibacterium acnes).